Here is a 99-residue protein sequence, read N- to C-terminus: Large ribosomal subunit protein eL36 (99 aa).

It belongs to the eukaryotic ribosomal protein eL36 family. In terms of assembly, component of the large ribosomal subunit. Mature ribosomes consist of a small (40S) and a large (60S) subunit. The 40S subunit contains about 32 different proteins and 1 molecule of RNA (18S). The 60S subunit contains 45 different proteins and 3 molecules of RNA (25S, 5.8S and 5S).

It is found in the cytoplasm. In terms of biological role, component of the ribosome, a large ribonucleoprotein complex responsible for the synthesis of proteins in the cell. The small ribosomal subunit (SSU) binds messenger RNAs (mRNAs) and translates the encoded message by selecting cognate aminoacyl-transfer RNA (tRNA) molecules. The large subunit (LSU) contains the ribosomal catalytic site termed the peptidyl transferase center (PTC), which catalyzes the formation of peptide bonds, thereby polymerizing the amino acids delivered by tRNAs into a polypeptide chain. The nascent polypeptides leave the ribosome through a tunnel in the LSU and interact with protein factors that function in enzymatic processing, targeting, and the membrane insertion of nascent chains at the exit of the ribosomal tunnel. This is Large ribosomal subunit protein eL36 from Candida albicans (strain SC5314 / ATCC MYA-2876) (Yeast).